Reading from the N-terminus, the 238-residue chain is Cysteine-rich venom protein pseudechetoxin-like (238 aa).

The signal sequence occupies residues 1–19 (MIAFTVLLSLAAVLQQSSG). Positions 20 to 28 (TVDFASESS) are excised as a propeptide. In terms of domain architecture, SCP spans 38–164 (VDKHNDLRRS…STKYLYVCQY (127 aa)). Cystine bridges form between C75–C153, C92–C165, C148–C162, C184–C191, C187–C196, C200–C233, C209–C227, and C218–C231. The ShKT domain maps to 200-233 (CKHNNDFSNCKALAKKSKCQTEWIKSKCPATCFC).

It belongs to the CRISP family. As to expression, expressed by the venom gland.

The protein resides in the secreted. Blocks olfactory (CNGA2) and retinal (CNGA1) CNG channel currents. Does not affect neither depolarization- nor caffeine-induced contraction of smooth muscle. The protein is Cysteine-rich venom protein pseudechetoxin-like of Oxyuranus scutellatus scutellatus (Australian taipan).